The primary structure comprises 817 residues: B lymphocyte-induced maturation protein 1 homolog (817 aa).

Residues 1 to 62 form a disordered region; the sequence is MGQGSGDDGV…PAGVSASGAR (62 aa). A compositionally biased stretch (low complexity) spans 15–61; the sequence is FSSAAAAAHSPPHSPLSVGVSSASSATSSSSTPPSSTSPAGVSASGA. One can recognise an SET domain in the interval 103–241; the sequence is MNLILKSSSK…ANTELSFWFS (139 aa). C2H2-type zinc fingers lie at residues 508–530, 536–558, 564–586, and 592–614; these read YACK…VRTH, FKCE…HLVH, HRCD…LRLH, and YTCD…KRLH. A C2H2-type 5; degenerate zinc finger spans residues 620–642; sequence YSCGTCGKKYISPSGLRTHWKTT. The tract at residues 709–817 is disordered; it reads LLGQGPSGMQ…LPSLGLPHYP (109 aa). Residues 779–794 are compositionally biased toward low complexity; that stretch reads QGGPSSGSGQQQHPQH.

As to quaternary structure, interacts with dre-1; the interaction targets blmp-1 for proteasomal degradation. Interacts with ldb-1 and ham-3. Ubiquitinated by the SCF(dre-1) complex, leading to its degradation by the proteasome. As to expression, expressed in hypodermal, vulval, intestinal and distal tip cells.

The protein localises to the nucleus. It is found in the cytoplasm. Transcription factor which binds to enhancer elements in the promoter region of genes. Regulates the expression of the transcription factor bed-3 to control vulval development. Promotes terminal differentiation in the hypodermis and is involved in regulation of gonadal outgrowth and entry into the dauer stage. Regulates the timing of dorsalward migration of the distal tip cells of the hermaphrodite gonad by inhibiting precocious unc-5 and lin-29 expression which in turn prevents early dorsalward turning. Plays a role in male tail tip morphogenesis. This Caenorhabditis elegans protein is B lymphocyte-induced maturation protein 1 homolog.